A 280-amino-acid polypeptide reads, in one-letter code: 2-dehydro-3-deoxyphosphooctonate aldolase (280 aa).

The protein belongs to the KdsA family.

The protein resides in the cytoplasm. The enzyme catalyses D-arabinose 5-phosphate + phosphoenolpyruvate + H2O = 3-deoxy-alpha-D-manno-2-octulosonate-8-phosphate + phosphate. It participates in carbohydrate biosynthesis; 3-deoxy-D-manno-octulosonate biosynthesis; 3-deoxy-D-manno-octulosonate from D-ribulose 5-phosphate: step 2/3. It functions in the pathway bacterial outer membrane biogenesis; lipopolysaccharide biosynthesis. The protein is 2-dehydro-3-deoxyphosphooctonate aldolase of Colwellia psychrerythraea (strain 34H / ATCC BAA-681) (Vibrio psychroerythus).